We begin with the raw amino-acid sequence, 508 residues long: MMMTKQKNSLAERLNIGEEVRELKLGATFNPKNTSTAFHTIKYDFKPASVDTSRMASVDVGSNNQVTVTVPNSESSGVPHTVYKGNQREYAKECLMIYDKETGAITIEKLNHNIQVKKTRNEVANKSVQLPGQNASVNMGQGQLHSQGANGSVPGPISAPGHSTGTAPKMENSTMRISTKTKVSTGSRRNNIIDFKPRNSPMQQSSPSRAVPVHRSPQSAPAWDANNAQQTLPSIPLITDDDDFGLRAALHNSGHANTSGSSTGSATGQPDFGSTSSSSHMGKQRQAPPHGHGKRQQMQQRLSPPMAQQQQPSNYGRGYNGGHNHVQQQQQRNSPQQQRPPAYGHGNSMPMDLDSTREHELTSQSVAQAAAALEQQIGGALSASSSSSESDSSDSDSGSDSDDSTEDDRPTQGQQQDHQQQQQQQVYQNHNHQQQQIAQQHLNQLPNLGLGSISPAYGSNHQHQQQMAPHQQQQKQQSGIYASNGGFPNDLLQNDLQLSSNSSDDDDE.

2 stretches are compositionally biased toward polar residues: residues 140–150 and 161–190; these read GQGQLHSQGAN and GHST…SRRN. 2 disordered regions span residues 140-226 and 251-508; these read GQGQ…WDAN and HNSG…DDDE. Ser-200 is modified (phosphoserine). Residues 251-268 show a composition bias toward low complexity; the sequence is HNSGHANTSGSSTGSATG. Composition is skewed to polar residues over residues 272 to 281 and 296 to 313; these read FGSTSSSSHM and QQMQ…QQPS. Residues 314–341 are compositionally biased toward low complexity; that stretch reads NYGRGYNGGHNHVQQQQQRNSPQQQRPP. Residues 391–406 are compositionally biased toward acidic residues; sequence DSSDSDSGSDSDDSTE. Composition is skewed to low complexity over residues 412–444, 461–477, and 489–502; these read QGQQ…HLNQ, HQHQ…QKQQ, and NDLL…SSNS.

It belongs to the EAF family.

It localises to the nucleus. Functionally, promotes transcriptional elongation by Su(Tpl)/ELL. Essential for development. In Drosophila erecta (Fruit fly), this protein is Ell-associated factor Eaf.